Reading from the N-terminus, the 313-residue chain is Cytochrome c biogenesis protein CcsA (313 aa).

8 helical membrane-spanning segments follow: residues 13 to 35 (ISFS…EIAG), 43 to 63 (GMIA…IYSG), 67 to 87 (LSNL…IHMI), 96 to 116 (FLSS…TSGL), 142 to 162 (MLLS…LLVI), 219 to 239 (VIGI…VWAN), 252 to 269 (ETWA…LHTR), and 280 to 300 (AIVA…VNLL).

Belongs to the CcmF/CycK/Ccl1/NrfE/CcsA family. As to quaternary structure, may interact with Ccs1.

It is found in the plastid. Its subcellular location is the chloroplast thylakoid membrane. Its function is as follows. Required during biogenesis of c-type cytochromes (cytochrome c6 and cytochrome f) at the step of heme attachment. This chain is Cytochrome c biogenesis protein CcsA, found in Amborella trichopoda.